A 355-amino-acid chain; its full sequence is Butyrate kinase 1 (355 aa).

The protein belongs to the acetokinase family.

It is found in the cytoplasm. It carries out the reaction butanoate + ATP = butanoyl phosphate + ADP. It functions in the pathway lipid metabolism; butanoate metabolism. Catalyzes the conversion of butyryl-CoA through butyryl phosphate to butyrate. The sequence is that of Butyrate kinase 1 (buk1) from Clostridium acetobutylicum (strain ATCC 824 / DSM 792 / JCM 1419 / IAM 19013 / LMG 5710 / NBRC 13948 / NRRL B-527 / VKM B-1787 / 2291 / W).